Reading from the N-terminus, the 607-residue chain is Glutamine--fructose-6-phosphate aminotransferase [isomerizing] (607 aa).

C2 functions as the Nucleophile; for GATase activity in the catalytic mechanism. Residues 2–217 enclose the Glutamine amidotransferase type-2 domain; the sequence is CGIIGIIGND…DGDWAVLTRN (216 aa). SIS domains lie at 283–422 and 455–597; these read IGID…ARGA and VCHD…VDQP. K602 serves as the catalytic For Fru-6P isomerization activity.

As to quaternary structure, homodimer.

The protein resides in the cytoplasm. It carries out the reaction D-fructose 6-phosphate + L-glutamine = D-glucosamine 6-phosphate + L-glutamate. In terms of biological role, catalyzes the first step in hexosamine metabolism, converting fructose-6P into glucosamine-6P using glutamine as a nitrogen source. In Brucella abortus biovar 1 (strain 9-941), this protein is Glutamine--fructose-6-phosphate aminotransferase [isomerizing].